Reading from the N-terminus, the 345-residue chain is Dense granule protein 4 (345 aa).

The first 20 residues, 1–20, serve as a signal peptide directing secretion; that stretch reads MQGTWFSLFVVVMVSHLACG. A compositionally biased stretch (polar residues) spans 227-251; the sequence is SVSVSTEDSGLTGVKDSSSSESTVT. Residues 227–271 are disordered; that stretch reads SVSVSTEDSGLTGVKDSSSSESTVTPADEAASESEEGDKTSRKSK. A helical transmembrane segment spans residues 276–296; that stretch reads ILTGLGVAATLAAAAAAAKAV. Residues 298-345 form a disordered region; it reads GFGGTRTSTAPAEAGKTELDDGYRPPPFNPRPSPYAELLKDLERMRKE. A compositionally biased stretch (pro residues) spans 321 to 330; the sequence is RPPPFNPRPS. A compositionally biased stretch (basic and acidic residues) spans 335–345; it reads LLKDLERMRKE.

Post-translationally, O-glycosylated.

Its subcellular location is the secreted. The protein resides in the parasitophorous vacuole lumen. The protein localises to the parasitophorous vacuole membrane. It is found in the cytoplasmic vesicle. It localises to the secretory vesicle. Functionally, major granular component involved in excreted-secreted antigen (ESA) immunity. The sequence is that of Dense granule protein 4 (GRA4) from Toxoplasma gondii.